Reading from the N-terminus, the 127-residue chain is Ribosome-binding factor A (127 aa).

Belongs to the RbfA family. As to quaternary structure, monomer. Binds 30S ribosomal subunits, but not 50S ribosomal subunits or 70S ribosomes.

Its subcellular location is the cytoplasm. In terms of biological role, one of several proteins that assist in the late maturation steps of the functional core of the 30S ribosomal subunit. Associates with free 30S ribosomal subunits (but not with 30S subunits that are part of 70S ribosomes or polysomes). Required for efficient processing of 16S rRNA. May interact with the 5'-terminal helix region of 16S rRNA. In Stenotrophomonas maltophilia (strain R551-3), this protein is Ribosome-binding factor A.